The sequence spans 344 residues: tRNA N6-adenosine threonylcarbamoyltransferase (344 aa).

Residues His110 and His114 each coordinate Fe cation. Substrate contacts are provided by residues 133 to 137 (VVSGA), Asp166, Gly179, and Asn278. Asp303 lines the Fe cation pocket.

This sequence belongs to the KAE1 / TsaD family. The cofactor is Fe(2+).

It localises to the cytoplasm. The enzyme catalyses L-threonylcarbamoyladenylate + adenosine(37) in tRNA = N(6)-L-threonylcarbamoyladenosine(37) in tRNA + AMP + H(+). Functionally, required for the formation of a threonylcarbamoyl group on adenosine at position 37 (t(6)A37) in tRNAs that read codons beginning with adenine. Is involved in the transfer of the threonylcarbamoyl moiety of threonylcarbamoyl-AMP (TC-AMP) to the N6 group of A37, together with TsaE and TsaB. TsaD likely plays a direct catalytic role in this reaction. This chain is tRNA N6-adenosine threonylcarbamoyltransferase, found in Chlamydia abortus (strain DSM 27085 / S26/3) (Chlamydophila abortus).